Reading from the N-terminus, the 672-residue chain is Iron-phytosiderophore transporter YSL15 (672 aa).

Positions 1-11 (MEHADADRTRV) are enriched in basic and acidic residues. Residues 1-27 (MEHADADRTRVAPEIGSLHDEDAEADP) form a disordered region. 14 consecutive transmembrane segments (helical) span residues 47-67 (GVVA…KIAL), 70-90 (GLVP…LRGW), 115-135 (CAVA…LLGL), 158-178 (GIGW…LSLI), 218-238 (LHGF…QWFY), 279-299 (LVNL…WPLI), 325-345 (FLCI…VTGV), 390-410 (MAYS…PIMF), 418-438 (VIIA…GAGL), 450-470 (IALF…AGLV), 504-524 (VGEL…FMLF), 556-576 (ISAL…FAVL), 602-622 (FLVG…LFAW), and 630-650 (AAFM…IWTF).

It belongs to the YSL (TC 2.A.67.2) family. In terms of tissue distribution, expressed in root phloem and at low levels in the shoot companion cells.

Its subcellular location is the cell membrane. Functionally, involved in Fe(3+) uptake from the rhizosphere and phloem transport of iron. Plays an important role in iron homeostasis during the early stages of growth. Transports Fe(3+)-phytosiderophore, but not Fe(3+)- or Fe(2+)-nicotianamine. May not transport other chelated metals. The chain is Iron-phytosiderophore transporter YSL15 (YSL15) from Oryza sativa subsp. japonica (Rice).